The chain runs to 368 residues: N-acetylneuraminate epimerase (368 aa).

An N-terminal signal peptide occupies residues 1-19 (MNKTITALTIIMASFATNA). Kelch repeat units follow at residues 40 to 84 (TVYI…AFID), 86 to 137 (NLYV…FVHN), 139 to 173 (KAYVTGGVNQNIFNGYFEDLNEAGKDSTTIDKINA), 174 to 219 (HYFD…VNKG), 222 to 265 (TWLI…VAGG), 287 to 336 (ENYQ…PWNN), and 338 to 367 (LLIIGGETAGGKAVTDSVLISVKDNKVTVQ). Residue E228 is the Proton acceptor of the active site.

Belongs to the NanM family. Homodimer.

Its subcellular location is the periplasm. The enzyme catalyses N-acetyl-alpha-neuraminate = N-acetyl-beta-neuraminate. Its function is as follows. Converts alpha-N-acetylneuranimic acid (Neu5Ac) to the beta-anomer, accelerating the equilibrium between the alpha- and beta-anomers. Probably facilitates sialidase-negative bacteria to compete successfully for limited amounts of extracellular Neu5Ac, which is likely taken up in the beta-anomer. In addition, the rapid removal of sialic acid from solution might be advantageous to the bacterium to damp down host responses. The chain is N-acetylneuraminate epimerase from Escherichia coli O1:K1 / APEC.